A 406-amino-acid chain; its full sequence is Succinylornithine transaminase/acetylornithine aminotransferase (406 aa).

Residues 108 to 109 and Phe141 contribute to the pyridoxal 5'-phosphate site; that span reads GA. Position 144 (Arg144) interacts with N(2)-acetyl-L-ornithine. Pyridoxal 5'-phosphate is bound at residue 226-229; the sequence is DEVQ. The residue at position 255 (Lys255) is an N6-(pyridoxal phosphate)lysine. N(2)-acetyl-L-ornithine is bound at residue Thr283. A pyridoxal 5'-phosphate-binding site is contributed by Thr284.

It belongs to the class-III pyridoxal-phosphate-dependent aminotransferase family. ArgD subfamily. In terms of assembly, homodimer. The cofactor is pyridoxal 5'-phosphate.

It is found in the cytoplasm. It carries out the reaction N(2)-succinyl-L-ornithine + 2-oxoglutarate = N-succinyl-L-glutamate 5-semialdehyde + L-glutamate. It catalyses the reaction N(2)-acetyl-L-ornithine + 2-oxoglutarate = N-acetyl-L-glutamate 5-semialdehyde + L-glutamate. Its pathway is amino-acid biosynthesis; L-arginine biosynthesis; N(2)-acetyl-L-ornithine from L-glutamate: step 4/4. It functions in the pathway amino-acid degradation; L-arginine degradation via AST pathway; L-glutamate and succinate from L-arginine: step 3/5. Transaminates both N(2)-acetylornithine and N(2)-succinylornithine. The sequence is that of Succinylornithine transaminase/acetylornithine aminotransferase (aruC) from Pseudomonas aeruginosa (strain ATCC 15692 / DSM 22644 / CIP 104116 / JCM 14847 / LMG 12228 / 1C / PRS 101 / PAO1).